Reading from the N-terminus, the 412-residue chain is Transforming growth factor beta-2 proprotein (412 aa).

Positions 1-20 (MHCYLLSVFLTLDLAAVALS) are cleaved as a signal peptide. N-linked (GlcNAc...) asparagine glycans are attached at residues Asn-72, Asn-139, and Asn-240. 4 cysteine pairs are disulfide-bonded: Cys-307/Cys-316, Cys-315/Cys-378, Cys-344/Cys-409, and Cys-348/Cys-411.

The protein belongs to the TGF-beta family. As to quaternary structure, interacts with Transforming growth factor beta-2 (TGF-beta-2) chain; interaction is non-covalent and maintains (TGF-beta-2) in a latent state. In terms of assembly, homodimer; disulfide-linked. Interacts with TGF-beta receptors (TGFBR1 and TGFBR2), leading to signal transduction. Post-translationally, the precursor proprotein is cleaved in the Golgi apparatus to form Transforming growth factor beta-2 (TGF-beta-2) and Latency-associated peptide (LAP) chains, which remain non-covalently linked, rendering TGF-beta-2 inactive.

The protein localises to the secreted. It localises to the extracellular space. The protein resides in the extracellular matrix. Precursor of the Latency-associated peptide (LAP) and Transforming growth factor beta-2 (TGF-beta-2) chains, which constitute the regulatory and active subunit of TGF-beta-2, respectively. Its function is as follows. Required to maintain the Transforming growth factor beta-2 (TGF-beta-2) chain in a latent state during storage in extracellular matrix. Associates non-covalently with TGF-beta-2 and regulates its activation via interaction with 'milieu molecules', such as LTBP1 and LRRC32/GARP, that control activation of TGF-beta-2. Functionally, multifunctional protein that regulates various processes such as angiogenesis and heart development. Activation into mature form follows different steps: following cleavage of the proprotein in the Golgi apparatus, Latency-associated peptide (LAP) and Transforming growth factor beta-2 (TGF-beta-2) chains remain non-covalently linked rendering TGF-beta-2 inactive during storage in extracellular matrix. At the same time, LAP chain interacts with 'milieu molecules', such as LTBP1 and LRRC32/GARP, that control activation of TGF-beta-2 and maintain it in a latent state during storage in extracellular milieus. Once activated following release of LAP, TGF-beta-2 acts by binding to TGF-beta receptors (TGFBR1 and TGFBR2), which transduce signal. This is Transforming growth factor beta-2 proprotein (TGFB2) from Gallus gallus (Chicken).